The chain runs to 232 residues: Large ribosomal subunit protein uL3 (232 aa).

It belongs to the universal ribosomal protein uL3 family. As to quaternary structure, part of the 50S ribosomal subunit. Forms a cluster with proteins L14 and L19.

Its function is as follows. One of the primary rRNA binding proteins, it binds directly near the 3'-end of the 23S rRNA, where it nucleates assembly of the 50S subunit. The chain is Large ribosomal subunit protein uL3 from Hydrogenobaculum sp. (strain Y04AAS1).